Consider the following 383-residue polypeptide: Protein RecA (383 aa).

ATP is bound at residue 79 to 86 (GPESSGKT). Residues 347 to 369 (IEEDNTEEKQSSKEKETDEKADK) are disordered. A compositionally biased stretch (basic and acidic residues) spans 353-369 (EEKQSSKEKETDEKADK).

The protein belongs to the RecA family.

Its subcellular location is the cytoplasm. Can catalyze the hydrolysis of ATP in the presence of single-stranded DNA, the ATP-dependent uptake of single-stranded DNA by duplex DNA, and the ATP-dependent hybridization of homologous single-stranded DNAs. It interacts with LexA causing its activation and leading to its autocatalytic cleavage. The protein is Protein RecA of Streptococcus mutans serotype c (strain ATCC 700610 / UA159).